Reading from the N-terminus, the 1121-residue chain is Piwi-like protein ergo-1 (1121 aa).

Residues 1–14 (MSYNNGGGGGGGGY) show a composition bias toward gly residues. The segment at 1–134 (MSYNNGGGGG…GNRGGGGGRV (134 aa)) is disordered. Composition is skewed to basic and acidic residues over residues 15–29 (RNDR…DRQN) and 40–77 (YNDD…DRRG). The span at 99-112 (GSNQRNDNYGNNRG) shows a compositional bias: polar residues. The segment covering 125 to 134 (GNRGGGGGRV) has biased composition (gly residues). The 109-residue stretch at 426–534 (VMTQILTKMT…MPLELVSYIV (109 aa)) folds into the PAZ domain. A Piwi domain is found at 774 to 1081 (NVLKYLADNK…AAKRAKETLD (308 aa)).

The protein belongs to the argonaute family. Piwi subfamily. In terms of assembly, interacts with rde-12. Interacts with rde-10. As to expression, highly expressed in the germline in hermaphrodites.

Its subcellular location is the cytoplasm. Argonaute protein required for gene silencing in the endogenous RNA interference (RNAi) pathway. Involved in the 26G RNAi pathway and associates with both unmethylated and methylated 26G small interfering RNAs (26G-siRNAs), which are a class of 26 nucleotide siRNAs that possess a guanine residue at the 5'-end. Associated 26G-siRNAs are methylated by the methyltransferase henn-1, which stabilizes the siRNAs. Association with 26G-siRNAs is required for the biogenesis of secondary 22G-siRNAs (a class of 22 nucleotide siRNAs that possess a triphosphorylated guanine residue at the 5'-end). May be involved in passenger strand cleavage of target 26G-siRNAs. This chain is Piwi-like protein ergo-1, found in Caenorhabditis elegans.